A 212-amino-acid polypeptide reads, in one-letter code: Actin-depolymerizing factor 1, isoforms a/b (212 aa).

Positions 3–159 constitute an ADF-H domain; it reads SGVMVDPDVQ…SHKELLNNCP (157 aa).

It belongs to the actin-binding proteins ADF family. As to quaternary structure, interacts with F-actin.

Its function is as follows. Depolymerizes growing actin filaments in muscle cells; required for the assembly of actin filaments into the functional contractile myofilament lattice of muscle. Competes with unc-87 for actin binding and inhibits the actin-bundling activity of unc-87. In Caenorhabditis elegans, this protein is Actin-depolymerizing factor 1, isoforms a/b.